Consider the following 479-residue polypeptide: Aspartyl/glutamyl-tRNA(Asn/Gln) amidotransferase subunit B (479 aa).

It belongs to the GatB/GatE family. GatB subfamily. As to quaternary structure, heterotrimer of A, B and C subunits.

It catalyses the reaction L-glutamyl-tRNA(Gln) + L-glutamine + ATP + H2O = L-glutaminyl-tRNA(Gln) + L-glutamate + ADP + phosphate + H(+). The catalysed reaction is L-aspartyl-tRNA(Asn) + L-glutamine + ATP + H2O = L-asparaginyl-tRNA(Asn) + L-glutamate + ADP + phosphate + 2 H(+). Functionally, allows the formation of correctly charged Asn-tRNA(Asn) or Gln-tRNA(Gln) through the transamidation of misacylated Asp-tRNA(Asn) or Glu-tRNA(Gln) in organisms which lack either or both of asparaginyl-tRNA or glutaminyl-tRNA synthetases. The reaction takes place in the presence of glutamine and ATP through an activated phospho-Asp-tRNA(Asn) or phospho-Glu-tRNA(Gln). This Alcanivorax borkumensis (strain ATCC 700651 / DSM 11573 / NCIMB 13689 / SK2) protein is Aspartyl/glutamyl-tRNA(Asn/Gln) amidotransferase subunit B.